Here is a 654-residue protein sequence, read N- to C-terminus: RING finger protein 112 (654 aa).

The RING-type zinc finger occupies 80–121 (CSICLERLREPISLDCGHDFCIRCFSTHRIPGCELPCCPECR). The interaction with ZBTB16 stretch occupies residues 154-654 (AVRAERLLLV…GDREPLLQEE (501 aa)). In terms of domain architecture, GB1/RHD3-type G spans 189 to 420 (DTPVCLLAVL…YILDVLSTAP (232 aa)). Residue 340 to 341 (RD) participates in GTP binding. The next 2 membrane-spanning stretches (helical) occupy residues 570 to 590 (LAAV…GVVG) and 603 to 623 (GMVA…GGGV).

Belongs to the TRAFAC class dynamin-like GTPase superfamily. GB1/RHD3 GTPase family. GB1 subfamily. Self-associates. Interacts with SP1 in an oxidative stress-regulated manner. Interacts with SIGMAR1 in an oxidative stress-regulated manner. Interacts with ZBTB16 (via C2H2-type zinc finger domains 1 and 2). Auto-ubiquitinated. As to expression, expressed in most of the brain areas, including cortex, striatum, hippocampus, thalamus, and cerebellum (at protein level). Expressed in lateral amygdaloid nucleus, and ventromedial hypothalamus. Also expressed strongly in the marginal zone of brain vesicles, optic stalk, and cartilage primordium.

The protein resides in the membrane. It localises to the cytoplasm. Its subcellular location is the nucleus. The protein localises to the nuclear body. It is found in the nucleoplasm. The protein resides in the endosome. It localises to the cytoplasmic vesicle. Its subcellular location is the secretory vesicle. The protein localises to the synaptic vesicle. It is found in the postsynaptic density. The protein resides in the perikaryon. It localises to the cell projection. Its subcellular location is the neuron projection. The catalysed reaction is S-ubiquitinyl-[E2 ubiquitin-conjugating enzyme]-L-cysteine + [acceptor protein]-L-lysine = [E2 ubiquitin-conjugating enzyme]-L-cysteine + N(6)-ubiquitinyl-[acceptor protein]-L-lysine.. Its pathway is protein modification; protein ubiquitination. In terms of biological role, E3 ubiquitin-protein ligase that plays an important role in neuronal differentiation, including neurogenesis and gliogenesis, during brain development. During embryonic development initiates neuronal differentiation by inducing cell cycle arrest at the G0/G1 phase through up-regulation of cell-cycle regulatory proteins. Plays a role not only in the fetal period during the development of the nervous system, but also in the adult brain, where it is involved in the maintenance of neural functions and protection of the nervous tissue cells from oxidative stress-induced damage. Exhibits GTPase and E3 ubiquitin-protein ligase activities. Regulates dendritic spine density and synaptic neurotransmission; its ability to hydrolyze GTP is involved in the maintenance of dendritic spine density. The polypeptide is RING finger protein 112 (Rnf112) (Mus musculus (Mouse)).